The sequence spans 204 residues: Large ribosomal subunit protein bL25 (204 aa).

This sequence belongs to the bacterial ribosomal protein bL25 family. CTC subfamily. In terms of assembly, part of the 50S ribosomal subunit; part of the 5S rRNA/L5/L18/L25 subcomplex. Contacts the 5S rRNA. Binds to the 5S rRNA independently of L5 and L18.

In terms of biological role, this is one of the proteins that binds to the 5S RNA in the ribosome where it forms part of the central protuberance. The chain is Large ribosomal subunit protein bL25 from Bordetella bronchiseptica (strain ATCC BAA-588 / NCTC 13252 / RB50) (Alcaligenes bronchisepticus).